Here is a 406-residue protein sequence, read N- to C-terminus: Vacuole membrane protein 1 (406 aa).

Residue Ala2 is modified to N-acetylalanine. Topologically, residues 2-43 (AENGQNCDQRRVAMNKEQYNGNFTDPSSVNEKKRRDREERQN) are cytoplasmic. A helical transmembrane segment spans residues 44–63 (IVLWRQPLITLQYFSLETLV). Residues 64–77 (ILKEWTSKLWHRQS) lie on the Extracellular side of the membrane. The chain crosses the membrane as a helical span at residues 78–98 (IVVSFLLLLAVLTATYYVEGA). Over 99–109 (HQQYVQRIEKQ) the chain is Cytoplasmic. A helical transmembrane segment spans residues 110–130 (FLLYAYWIGLGILSSVGLGTG). The Extracellular portion of the chain corresponds to 131–250 (LHTFLLYLGP…ASRAKLAVQN (120 aa)). Residues 173–316 (GTEGTISLWS…FVIVAFSKHI (144 aa)) form a VTT domain region. A helical membrane pass occupies residues 251-271 (LVQKVGFFGILACASIPNPLF). Topologically, residues 272-273 (DL) are cytoplasmic. A helical membrane pass occupies residues 274-294 (AGITCGHFLVPFWTFFGATLI). The Extracellular segment spans residues 295 to 306 (GKAIIKMHIQKL). Residues 307–327 (FVIVAFSKHIVEQMVAFIGAV) traverse the membrane as a helical segment. At 328 to 363 (PGIGPSLQKPFQEYLEAQRQKLHHRSEMGTPQGENW) the chain is on the cytoplasmic side. A helical transmembrane segment spans residues 364–384 (LSWMFEKLVVVMVCYFILSII). Over 385–406 (NSMAQSYAKRIQQRLDPKEKTK) the chain is Extracellular.

Belongs to the VMP1 family. Interacts with BECN1. Interacts with TJP1. Interacts with TP53INP2. Interacts with TMEM41B. Interacts with ATP2A2, PLN and SLN; competes with PLN and SLN to prevent them from forming an inhibitory complex with ATP2A2. Interacts with ATG2A.

It is found in the endoplasmic reticulum-Golgi intermediate compartment membrane. Its subcellular location is the cell membrane. It localises to the vacuole membrane. The protein localises to the endoplasmic reticulum membrane. It catalyses the reaction a 1,2-diacyl-sn-glycero-3-phospho-L-serine(in) = a 1,2-diacyl-sn-glycero-3-phospho-L-serine(out). The catalysed reaction is cholesterol(in) = cholesterol(out). The enzyme catalyses a 1,2-diacyl-sn-glycero-3-phosphocholine(in) = a 1,2-diacyl-sn-glycero-3-phosphocholine(out). It carries out the reaction a 1,2-diacyl-sn-glycero-3-phosphoethanolamine(in) = a 1,2-diacyl-sn-glycero-3-phosphoethanolamine(out). Its function is as follows. Phospholipid scramblase involved in lipid homeostasis and membrane dynamics processes. Has phospholipid scramblase activity toward cholesterol and phosphatidylserine, as well as phosphatidylethanolamine and phosphatidylcholine. Required for autophagosome formation: participates in early stages of autophagosome biogenesis at the endoplasmic reticulum (ER) membrane by reequilibrating the leaflets of the ER as lipids are extracted by ATG2 (ATG2A or ATG2B) to mediate autophagosome assembly. Regulates ATP2A2 activity to control ER-isolation membrane contacts for autophagosome formation. In addition to autophagy, involved in other processes in which phospholipid scramblase activity is required. Modulates ER contacts with lipid droplets, mitochondria and endosomes. Plays an essential role in formation of cell junctions. Upon stress such as bacterial and viral infection, promotes formation of cytoplasmic vacuoles followed by cell death. Involved in the cytoplasmic vacuolization of acinar cells during the early stage of acute pancreatitis. The polypeptide is Vacuole membrane protein 1 (Bos taurus (Bovine)).